Consider the following 116-residue polypeptide: Prefoldin subunit beta (116 aa).

The protein belongs to the prefoldin subunit beta family. As to quaternary structure, heterohexamer of two alpha and four beta subunits.

The protein resides in the cytoplasm. Its function is as follows. Molecular chaperone capable of stabilizing a range of proteins. Seems to fulfill an ATP-independent, HSP70-like function in archaeal de novo protein folding. In Thermococcus onnurineus (strain NA1), this protein is Prefoldin subunit beta.